A 394-amino-acid polypeptide reads, in one-letter code: Elongation factor Tu (394 aa).

The 195-residue stretch at K10 to E204 folds into the tr-type G domain. The G1 stretch occupies residues G19–T26. GTP is bound at residue G19–T26. T26 is a Mg(2+) binding site. A G2 region spans residues G60–N64. The segment at D81–G84 is G3. Residues D81–H85 and N136–D139 each bind GTP. The tract at residues N136–D139 is G4. The interval S174–L176 is G5.

Belongs to the TRAFAC class translation factor GTPase superfamily. Classic translation factor GTPase family. EF-Tu/EF-1A subfamily. As to quaternary structure, monomer.

It is found in the cytoplasm. The catalysed reaction is GTP + H2O = GDP + phosphate + H(+). In terms of biological role, GTP hydrolase that promotes the GTP-dependent binding of aminoacyl-tRNA to the A-site of ribosomes during protein biosynthesis. The chain is Elongation factor Tu from Neisseria gonorrhoeae (strain ATCC 700825 / FA 1090).